Reading from the N-terminus, the 171-residue chain is 3-hydroxydecanoyl-[acyl-carrier-protein] dehydratase (171 aa).

The active site involves His70.

This sequence belongs to the thioester dehydratase family. FabA subfamily. In terms of assembly, homodimer.

Its subcellular location is the cytoplasm. The enzyme catalyses a (3R)-hydroxyacyl-[ACP] = a (2E)-enoyl-[ACP] + H2O. It catalyses the reaction (3R)-hydroxydecanoyl-[ACP] = (2E)-decenoyl-[ACP] + H2O. The catalysed reaction is (2E)-decenoyl-[ACP] = (3Z)-decenoyl-[ACP]. The protein operates within lipid metabolism; fatty acid biosynthesis. Functionally, necessary for the introduction of cis unsaturation into fatty acids. Catalyzes the dehydration of (3R)-3-hydroxydecanoyl-ACP to E-(2)-decenoyl-ACP and then its isomerization to Z-(3)-decenoyl-ACP. Can catalyze the dehydratase reaction for beta-hydroxyacyl-ACPs with saturated chain lengths up to 16:0, being most active on intermediate chain length. This is 3-hydroxydecanoyl-[acyl-carrier-protein] dehydratase from Shewanella loihica (strain ATCC BAA-1088 / PV-4).